The primary structure comprises 1142 residues: Serine/threonine-protein kinase dst2 (1142 aa).

Residues 20–276 (FELIEEIAEG…ATELLKHPFV (257 aa)) form the Protein kinase domain. Residues 26–34 (IAEGSFGTV) and lysine 49 each bind ATP. The Proton acceptor role is filled by aspartate 141. Positions 300–322 (LEEGGDEDEDSSEQEGMDSDDKD) are enriched in acidic residues. 5 disordered regions span residues 300–492 (LEEG…KTLE), 515–636 (KKQQ…KSTP), 744–768 (ETNH…TEQR), 939–974 (SIEE…GSVT), and 1040–1142 (EEQK…DNQD). Basic and acidic residues predominate over residues 323-336 (SDLKKSVGTSDRKS). Polar residues predominate over residues 355–365 (QRKSTGQNLQL). Low complexity predominate over residues 371 to 390 (QQSSSSSSSSSSSLSSQSLQ). Residues 391 to 413 (PQAVNKSTDRLSANINGSNTKSN) are compositionally biased toward polar residues. A compositionally biased stretch (low complexity) spans 421-452 (AAASASASSLNLSTGNLQQSLSGSGSITTNSG). Positions 467–477 (SSDDRSPDIRT) are enriched in basic and acidic residues. Over residues 541–554 (KQNAAKATQQQKQS) the composition is skewed to low complexity. Composition is skewed to basic and acidic residues over residues 555-588 (AAKE…KKNQ), 597-635 (KVTD…DKST), 744-760 (ETNH…EQHI), and 939-969 (SIEE…EQKK). Positions 716–1050 (QEYHTVLREN…EQKKSKLKLK (335 aa)) form a coiled coil. Over residues 1068–1091 (TGTTPPSTSSNQKTLNNSNGASSN) the composition is skewed to low complexity.

It belongs to the protein kinase superfamily. STE Ser/Thr protein kinase family. STE20 subfamily. Mg(2+) serves as cofactor.

The catalysed reaction is L-seryl-[protein] + ATP = O-phospho-L-seryl-[protein] + ADP + H(+). It catalyses the reaction L-threonyl-[protein] + ATP = O-phospho-L-threonyl-[protein] + ADP + H(+). The protein is Serine/threonine-protein kinase dst2 of Dictyostelium discoideum (Social amoeba).